The following is a 438-amino-acid chain: Zinc finger protein 641 (438 aa).

Positions 1–53 (MQAEDRSQFGSAAEMLSEQTAALGTGWESMNVQLDGAEPQVERGSQEERPWRT) are disordered. Polar residues predominate over residues 17 to 32 (SEQTAALGTGWESMNV). A compositionally biased stretch (basic and acidic residues) spans 40–51 (QVERGSQEERPW). Positions 109-181 (VTIKDVSLCF…DPQDLEERDI (73 aa)) constitute a KRAB domain. The segment at 171–265 (PDPQDLEERD…EMDSLLRPHT (95 aa)) is transactivation. Ser-191 carries the post-translational modification Phosphoserine. 3 consecutive C2H2-type zinc fingers follow at residues 264–286 (HTCP…QQTH), 292–314 (YSCL…QKTH), and 320–342 (SRCS…QRVH). The segment at 345 to 367 (GKSCKGQEVGESPGTRKRQRAPP) is disordered. 2 consecutive C2H2-type zinc fingers follow at residues 372 to 394 (HVCT…WLTH) and 400 to 422 (FQCP…LLTH). Residues 418–438 (HLLTHQGQSPRNSWDRGTSVF) are disordered. The segment covering 422-438 (HQGQSPRNSWDRGTSVF) has biased composition (polar residues). Phosphoserine is present on Ser-426.

The protein belongs to the krueppel C2H2-type zinc-finger protein family. As to expression, highly expressed in skeletal muscle, moderate expression in heart, liver, and pancreas, lower expression in placenta, no expression seen in brain, lung, and kidney.

It localises to the nucleus. Transcriptional activator. Activates transcriptional activities of SRE and AP-1. This is Zinc finger protein 641 (ZNF641) from Homo sapiens (Human).